Reading from the N-terminus, the 158-residue chain is Large ribosomal subunit protein bL19 (158 aa).

The segment covering serine 119 to alanine 129 has biased composition (basic and acidic residues). Residues serine 119–glutamate 158 form a disordered region. Positions arginine 130 to glutamine 139 are enriched in low complexity. Over residues glycine 140–glutamate 158 the composition is skewed to polar residues.

It belongs to the bacterial ribosomal protein bL19 family.

Its function is as follows. This protein is located at the 30S-50S ribosomal subunit interface and may play a role in the structure and function of the aminoacyl-tRNA binding site. The chain is Large ribosomal subunit protein bL19 from Deinococcus geothermalis (strain DSM 11300 / CIP 105573 / AG-3a).